Consider the following 612-residue polypeptide: Elongation factor 4 (612 aa).

One can recognise a tr-type G domain in the interval 11–193 (KHIRNFSIIA…RIVTDVPAPS (183 aa)). GTP-binding positions include 23-28 (DHGKST) and 140-143 (NKVD).

This sequence belongs to the TRAFAC class translation factor GTPase superfamily. Classic translation factor GTPase family. LepA subfamily.

It is found in the cell membrane. It catalyses the reaction GTP + H2O = GDP + phosphate + H(+). Its function is as follows. Required for accurate and efficient protein synthesis under certain stress conditions. May act as a fidelity factor of the translation reaction, by catalyzing a one-codon backward translocation of tRNAs on improperly translocated ribosomes. Back-translocation proceeds from a post-translocation (POST) complex to a pre-translocation (PRE) complex, thus giving elongation factor G a second chance to translocate the tRNAs correctly. Binds to ribosomes in a GTP-dependent manner. This is Elongation factor 4 from Lacticaseibacillus paracasei (strain ATCC 334 / BCRC 17002 / CCUG 31169 / CIP 107868 / KCTC 3260 / NRRL B-441) (Lactobacillus paracasei).